Here is a 212-residue protein sequence, read N- to C-terminus: Pyridoxine/pyridoxamine 5'-phosphate oxidase (212 aa).

Residues 8–11 and K66 each bind substrate; that span reads RTDY. Residues 61 to 66, 76 to 77, K83, and Q105 each bind FMN; these read RIVLLK and FT. Substrate is bound by residues Y123, R127, and S131. FMN-binding positions include 140-141 and W184; that span reads QS. A substrate-binding site is contributed by 190 to 192; sequence RLH. R194 is a binding site for FMN.

It belongs to the pyridoxamine 5'-phosphate oxidase family. In terms of assembly, homodimer. Requires FMN as cofactor.

It catalyses the reaction pyridoxamine 5'-phosphate + O2 + H2O = pyridoxal 5'-phosphate + H2O2 + NH4(+). The enzyme catalyses pyridoxine 5'-phosphate + O2 = pyridoxal 5'-phosphate + H2O2. The protein operates within cofactor metabolism; pyridoxal 5'-phosphate salvage; pyridoxal 5'-phosphate from pyridoxamine 5'-phosphate: step 1/1. It participates in cofactor metabolism; pyridoxal 5'-phosphate salvage; pyridoxal 5'-phosphate from pyridoxine 5'-phosphate: step 1/1. In terms of biological role, catalyzes the oxidation of either pyridoxine 5'-phosphate (PNP) or pyridoxamine 5'-phosphate (PMP) into pyridoxal 5'-phosphate (PLP). This is Pyridoxine/pyridoxamine 5'-phosphate oxidase from Ralstonia pickettii (strain 12J).